A 308-amino-acid polypeptide reads, in one-letter code: tRNA dimethylallyltransferase (308 aa).

Position 17–24 (Gly17–Ser24) interacts with ATP. Thr19–Ser24 contributes to the substrate binding site.

The protein belongs to the IPP transferase family. As to quaternary structure, monomer. Mg(2+) serves as cofactor.

It carries out the reaction adenosine(37) in tRNA + dimethylallyl diphosphate = N(6)-dimethylallyladenosine(37) in tRNA + diphosphate. Its function is as follows. Catalyzes the transfer of a dimethylallyl group onto the adenine at position 37 in tRNAs that read codons beginning with uridine, leading to the formation of N6-(dimethylallyl)adenosine (i(6)A). This chain is tRNA dimethylallyltransferase, found in Paenarthrobacter aurescens (strain TC1).